The primary structure comprises 314 residues: 4-hydroxy-3-methylbut-2-enyl diphosphate reductase (314 aa).

Cysteine 12 contacts [4Fe-4S] cluster. Histidine 43 and histidine 81 together coordinate (2E)-4-hydroxy-3-methylbut-2-enyl diphosphate. Residues histidine 43 and histidine 81 each contribute to the dimethylallyl diphosphate site. Positions 43 and 81 each coordinate isopentenyl diphosphate. A [4Fe-4S] cluster-binding site is contributed by cysteine 103. Histidine 131 is a (2E)-4-hydroxy-3-methylbut-2-enyl diphosphate binding site. Histidine 131 contacts dimethylallyl diphosphate. An isopentenyl diphosphate-binding site is contributed by histidine 131. Residue glutamate 133 is the Proton donor of the active site. Threonine 170 provides a ligand contact to (2E)-4-hydroxy-3-methylbut-2-enyl diphosphate. Cysteine 198 contacts [4Fe-4S] cluster. (2E)-4-hydroxy-3-methylbut-2-enyl diphosphate is bound by residues serine 226, asparagine 228, and serine 271. Serine 226, asparagine 228, and serine 271 together coordinate dimethylallyl diphosphate. Isopentenyl diphosphate is bound by residues serine 226, asparagine 228, and serine 271.

It belongs to the IspH family. [4Fe-4S] cluster is required as a cofactor.

The catalysed reaction is isopentenyl diphosphate + 2 oxidized [2Fe-2S]-[ferredoxin] + H2O = (2E)-4-hydroxy-3-methylbut-2-enyl diphosphate + 2 reduced [2Fe-2S]-[ferredoxin] + 2 H(+). The enzyme catalyses dimethylallyl diphosphate + 2 oxidized [2Fe-2S]-[ferredoxin] + H2O = (2E)-4-hydroxy-3-methylbut-2-enyl diphosphate + 2 reduced [2Fe-2S]-[ferredoxin] + 2 H(+). It functions in the pathway isoprenoid biosynthesis; dimethylallyl diphosphate biosynthesis; dimethylallyl diphosphate from (2E)-4-hydroxy-3-methylbutenyl diphosphate: step 1/1. It participates in isoprenoid biosynthesis; isopentenyl diphosphate biosynthesis via DXP pathway; isopentenyl diphosphate from 1-deoxy-D-xylulose 5-phosphate: step 6/6. Functionally, catalyzes the conversion of 1-hydroxy-2-methyl-2-(E)-butenyl 4-diphosphate (HMBPP) into a mixture of isopentenyl diphosphate (IPP) and dimethylallyl diphosphate (DMAPP). Acts in the terminal step of the DOXP/MEP pathway for isoprenoid precursor biosynthesis. This Bacillus subtilis (strain 168) protein is 4-hydroxy-3-methylbut-2-enyl diphosphate reductase.